We begin with the raw amino-acid sequence, 386 residues long: MAIKKMTDLNLAGKRVLIREDLNVPVKDGKVSSDARIRASLPTIKAAKDAGAKVMLMSHLGRPEEGVYDEASSMKPVAEHLGTLLGQEVRLIKDYLDGVEVADGEVVLFENVRFNKGEKKDNEELARQYAALCDIYVMDAFGTAHRAQASTHGVARFAPEACAGPLLAAELEALGKALDNPAKPVVAIVGGSKVSTKLDVLNALEKVCDQIIVGGGIANTFLAAAGHPVGKSLCEHDLIDTAKDIASRVEIPLPVDVVVASEFAETATATTKNISDVSDDDMILDVGPETAGQFAELLKNAKTILWNGPVGVFEFDQFGNGTKALAQAIAESDAFSLAGGGDTVAAVDKYGVADKISYISTGGGAFLEFVEGKTLPAVAVLEERGD.

Substrate is bound by residues 21 to 23 (DLN), arginine 36, 59 to 62 (HLGR), arginine 113, and arginine 146. ATP is bound by residues lysine 197, glutamate 314, and 340–343 (GGDT).

The protein belongs to the phosphoglycerate kinase family. Monomer.

It is found in the cytoplasm. The catalysed reaction is (2R)-3-phosphoglycerate + ATP = (2R)-3-phospho-glyceroyl phosphate + ADP. Its pathway is carbohydrate degradation; glycolysis; pyruvate from D-glyceraldehyde 3-phosphate: step 2/5. The polypeptide is Phosphoglycerate kinase (Marinobacter nauticus (strain ATCC 700491 / DSM 11845 / VT8) (Marinobacter aquaeolei)).